The chain runs to 580 residues: Aspartate--tRNA ligase (580 aa).

E173 is an L-aspartate binding site. Residues 195–198 (QIYK) form an aspartate region. L-aspartate is bound at residue R217. Residues 217-219 (RDE) and Q226 contribute to the ATP site. An L-aspartate-binding site is contributed by H443. E477 lines the ATP pocket. R484 contacts L-aspartate. 529–532 (GIER) contributes to the ATP binding site.

The protein belongs to the class-II aminoacyl-tRNA synthetase family. Type 1 subfamily. As to quaternary structure, homodimer.

The protein resides in the cytoplasm. The enzyme catalyses tRNA(Asp) + L-aspartate + ATP = L-aspartyl-tRNA(Asp) + AMP + diphosphate. In terms of biological role, catalyzes the attachment of L-aspartate to tRNA(Asp) in a two-step reaction: L-aspartate is first activated by ATP to form Asp-AMP and then transferred to the acceptor end of tRNA(Asp). In Malacoplasma penetrans (strain HF-2) (Mycoplasma penetrans), this protein is Aspartate--tRNA ligase.